The following is an 857-amino-acid chain: Protein argonaute-1 (857 aa).

The PAZ domain maps to 227 to 346 (PVIEFMCEVL…LPLEVCNIVA (120 aa)). 2 interaction with guide RNA regions span residues 309–314 (YFKQKY) and 522–564 (GKTP…LCLK). A Piwi domain is found at 515-816 (LIIVILPGKT…VAFRARYHLV (302 aa)). Residues 670–675 (PEGQLP) are impairs access of bound RNA to the active site. 3 interaction with guide RNA regions span residues 708 to 712 (RHHTR), 751 to 759 (HAGIQGTSR), and 788 to 813 (YVRC…RARY).

This sequence belongs to the argonaute family. Ago subfamily. In terms of assembly, interacts with DDB1, DDX5, DDX6, DHX30, DHX36, DDX47, DICER1, AGO2, ELAVL1, HNRNPF, IGF2BP1, ILF3, IMP8, MATR3, MOV10, PABPC1, PRMT5, RBM4, SART3, TNRC6B, UPF1 and YBX1. Associates with polysomes and messenger ribonucleoproteins (mNRPs). Interacts with LIMD1, WTIP and AJUBA. Interacts with APOBEC3F, APOBEC3G and APOBEC3H. Post-translationally, ubiquitinated on surface-exposed lysines by a SCF-like E3 ubiquitin-protein ligase complex containing ZSWIM8 during target-directed microRNA degradation (TDMD), a process that mediates degradation of microRNAs (miRNAs). Ubiquitination by the SCF-like E3 ubiquitin-protein ligase complex containing ZSWIM8 leads to its subsequent degradation, thereby exposing miRNAs for degradation. ZSWIM8 recognizes and binds AGO1 when it is engaged with a TDMD target.

The protein resides in the cytoplasm. The protein localises to the P-body. Its function is as follows. Required for RNA-mediated gene silencing (RNAi). Binds to short RNAs such as microRNAs (miRNAs) or short interfering RNAs (siRNAs), and represses the translation of mRNAs which are complementary to them. Lacks endonuclease activity and does not appear to cleave target mRNAs. Also required for transcriptional gene silencing (TGS) of promoter regions which are complementary to bound short antigene RNAs (agRNAs). The chain is Protein argonaute-1 (AGO1) from Homo sapiens (Human).